The chain runs to 62 residues: MARKALWAKSFLKEPKFKTRKHARCPLCGRPRGYLRQFDMCRICFRERALRGEIPGVKKASW.

Residues cysteine 25, cysteine 28, cysteine 41, and cysteine 44 each contribute to the Zn(2+) site.

It belongs to the universal ribosomal protein uS14 family. Zinc-binding uS14 subfamily. Part of the 30S ribosomal subunit. Contacts proteins S3 and S10. Zn(2+) serves as cofactor.

Binds 16S rRNA, required for the assembly of 30S particles and may also be responsible for determining the conformation of the 16S rRNA at the A site. This chain is Small ribosomal subunit protein uS14, found in Persephonella marina (strain DSM 14350 / EX-H1).